The following is a 527-amino-acid chain: Gustatory receptor for bitter taste 66a (527 aa).

The Cytoplasmic segment spans residues 1–46; it reads MAQAEDAVQPLLQQFQQLFFISKIAGILPQDLEKFRSRNLLEKSRN. A helical membrane pass occupies residues 47–67; that stretch reads GMIYMLSTLILYVVLYNILIY. Residues 68-80 lie on the Extracellular side of the membrane; the sequence is SFGEEDRSLKASQ. Residues 81-101 form a helical membrane-spanning segment; it reads STLTFVIGLFLTYIGLIMMVS. The Cytoplasmic portion of the chain corresponds to 102–144; that stretch reads DQLTALRNQGRIGELYERIRLVDERLYKEGCVMDNSTIGRRIR. Residues 145-165 traverse the membrane as a helical segment; the sequence is IMLIMTVIFELSILVSTYVKL. Residues 166-174 are Extracellular-facing; it reads VDYSQWMSL. Residues 175-195 form a helical membrane-spanning segment; that stretch reads LWIVSAIPTFINTLDKIWFAV. The Cytoplasmic portion of the chain corresponds to 196-345; the sequence is SLYALKERFE…KALNELWSYP (150 aa). A helical transmembrane segment spans residues 346–366; the sequence is ILSLMAYGFLIFTAQLYFLYC. The Extracellular portion of the chain corresponds to 367–382; the sequence is ATQYQSIPSLFRSAKN. A helical transmembrane segment spans residues 383–403; sequence PFITVIVLSYTSGKCVYLIYL. Over 404-460 the chain is Cytoplasmic; it reads SWKTSQASKRTGISLHKCGVVADDNLLYEIVNHLSLKLLNHSVDFSACGFFTLDMET. The helical transmembrane segment at 461–481 threads the bilayer; that stretch reads LYGVSGGITSYLIILIQFNLA. Residues 482–527 lie on the Extracellular side of the membrane; sequence AQQAKEAIQTFNSLNDTAGLVGAATDMDNISSTLRDFVTTTMTPAV. Residues asparagine 496 and asparagine 510 are each glycosylated (N-linked (GlcNAc...) asparagine).

Belongs to the insect chemoreceptor superfamily. Gustatory receptor (GR) family. Gr66a subfamily. Taste hairs in labial palps, labral and cibarial sense organs and forelegs. In larvae, is expressed in neurons of the terminal external chemosensory organ, as well as in the dorsal, ventral, and posterior pharyngeal sense organs.

It is found in the cell membrane. Its function is as follows. Gustatory receptor required for response to the bitter in taste neurons. Gr66a cells respond to bitter compounds such as caffeine, theophylline, threonine or valine. Flies avoid bitter substances, suggesting that Gr66a neuron activity is sufficient to mediate avoidance behavior. Required for sensing and avoiding N,N-Diethyl-meta-toluamide (DEET), the most widely used insect repellent worldwide, as well as to L-canavanine, a plant-derived insecticide. Gr66a neurons are also involved in the sex-specific perception of molecules inducing male avoidance behavior, probably through sensing 7-tricosene (7-T), a male cuticular pheromone and leading to inhibition of male-male courtship. Finally, also plays a role in oviposition behavior, in which females evaluate their environment and choose to lay eggs on substrates they may find aversive in other contexts. The protein is Gustatory receptor for bitter taste 66a (Gr66a) of Drosophila melanogaster (Fruit fly).